The sequence spans 986 residues: Resact receptor (986 aa).

The signal sequence occupies residues 1-21; that stretch reads MATTRLLFLLVVAVMITMVRS. The Extracellular segment spans residues 22–507; sequence ATLHYNPTVI…GELCTNWGLY (486 aa). Residues asparagine 185, asparagine 361, and asparagine 410 are each glycosylated (N-linked (GlcNAc...) asparagine). The helical transmembrane segment at 508-528 threads the bilayer; it reads LGTLIPAFIIIFGGGLGYYIY. Residues 529–986 are Cytoplasmic-facing; that stretch reads RKRAYEAALD…SHSCSALHSS (458 aa). Positions 568–836 constitute a Protein kinase domain; the sequence is LSAISVISNA…PNIIEVRTML (269 aa).

Its subcellular location is the membrane. The enzyme catalyses GTP = 3',5'-cyclic GMP + diphosphate. Implicated as a cell-surface receptor on spermatozoa for 'resact' a chemotactic peptide, and on various other cells as a receptor for atrial natriuretic peptide. In Arbacia punctulata (Punctuate sea urchin), this protein is Resact receptor.